The primary structure comprises 326 residues: Neuferricin homolog (326 aa).

The first 34 residues, 1 to 34 (MEKNRRKKDDAGVMTKTLAGVAALTFLVSFICSS), serve as a signal peptide directing secretion. The Cytochrome b5 heme-binding domain occupies 98 to 197 (KHVFTPEQLH…KEYPLVGVVA (100 aa)).

The protein belongs to the cytochrome b5 family. MAPR subfamily.

It localises to the secreted. Functionally, heme-binding protein. In Caenorhabditis briggsae, this protein is Neuferricin homolog.